The primary structure comprises 148 residues: Cuticle protein CP1499 (148 aa).

Calcified shell.

This Cancer pagurus (Rock crab) protein is Cuticle protein CP1499.